A 122-amino-acid chain; its full sequence is Large ribosomal subunit protein uL14 (122 aa).

This sequence belongs to the universal ribosomal protein uL14 family. As to quaternary structure, part of the 50S ribosomal subunit. Forms a cluster with proteins L3 and L19. In the 70S ribosome, L14 and L19 interact and together make contacts with the 16S rRNA in bridges B5 and B8.

Binds to 23S rRNA. Forms part of two intersubunit bridges in the 70S ribosome. The sequence is that of Large ribosomal subunit protein uL14 from Bradyrhizobium sp. (strain BTAi1 / ATCC BAA-1182).